Here is a 173-residue protein sequence, read N- to C-terminus: Alpha-crystallin B chain (173 aa).

The residue at position 1 (Met1) is an N-acetylmethionine. A sHSP domain is found at 54 to 162 (RLPSWIESGL…PERSIPITRE (109 aa)). Zn(2+) is bound by residues His81, His102, Glu104, and His109.

The protein belongs to the small heat shock protein (HSP20) family. As to quaternary structure, heteromer composed of three CRYAA and one CRYAB subunits. Aggregates with homologous proteins, including the small heat shock protein HSPB1, to form large heteromeric complexes. Inter-subunit bridging via zinc ions enhances stability, which is crucial as there is no protein turn over in the lens.

In terms of biological role, may contribute to the transparency and refractive index of the lens. This Aquarana catesbeiana (American bullfrog) protein is Alpha-crystallin B chain (CRYAB).